A 300-amino-acid chain; its full sequence is Formylmethanofuran--tetrahydromethanopterin formyltransferase-like protein (300 aa).

Belongs to the FTR family.

The protein is Formylmethanofuran--tetrahydromethanopterin formyltransferase-like protein of Methanopyrus kandleri (strain AV19 / DSM 6324 / JCM 9639 / NBRC 100938).